The following is a 158-amino-acid chain: Sporulation-delaying protein SdpA (158 aa).

It is found in the cytoplasm. Its function is as follows. Required for the maturation of SdpC to SDP. Not required for SdpC signal peptide cleavage, secretion from the cell or disulfide bond formation. This Bacillus subtilis (strain 168) protein is Sporulation-delaying protein SdpA.